The sequence spans 268 residues: Tryptophan synthase alpha chain (268 aa).

Residues E49 and D60 each act as proton acceptor in the active site.

This sequence belongs to the TrpA family. In terms of assembly, tetramer of two alpha and two beta chains.

The enzyme catalyses (1S,2R)-1-C-(indol-3-yl)glycerol 3-phosphate + L-serine = D-glyceraldehyde 3-phosphate + L-tryptophan + H2O. It participates in amino-acid biosynthesis; L-tryptophan biosynthesis; L-tryptophan from chorismate: step 5/5. Functionally, the alpha subunit is responsible for the aldol cleavage of indoleglycerol phosphate to indole and glyceraldehyde 3-phosphate. This chain is Tryptophan synthase alpha chain, found in Shigella boydii serotype 18 (strain CDC 3083-94 / BS512).